The chain runs to 152 residues: ALK and LTK ligand 2 (152 aa).

The signal sequence occupies residues 1-24; the sequence is MRGPGHPLLLGLLLVLGAAGRGRG. 2 cysteine pairs are disulfide-bonded: cysteine 111/cysteine 147 and cysteine 125/cysteine 134.

It belongs to the ALKAL family. As to quaternary structure, homodimer; interchain disulfide bond is not required for homodimerization. As to expression, widely expressed with highest levels in adrenal gland and modest levels in pancreas, testis and uterus.

It is found in the secreted. It localises to the cell membrane. Functionally, cytokine that acts as a physiological ligand for receptor tyrosine kinases LTK and ALK, leading to their activation. Cytokine-binding is sufficient to activate LTK. In contrast, ALKAL2-driven activation of ALK is coupled with heparin-binding to ALK. Stimulation of ALK signaling is involved in neural development and regulation of energy expenditure. The polypeptide is ALK and LTK ligand 2 (Homo sapiens (Human)).